The primary structure comprises 342 residues: NADH-quinone oxidoreductase subunit H (342 aa).

The next 8 membrane-spanning stretches (helical) occupy residues 15-35 (LLIITALQALAILVPLMLMVA), 86-106 (VLFILAPLLTFILAMIAWAVV), 119-139 (VGVLYLFAISSLGVYGVIIAG), 159-179 (VSYEVSIGFVMVAILLCVGSL), 190-210 (HVWFVLPMLPMAVIFFISGLA), 251-271 (FMICAMTTLLFLGGWLPPFDI), 277-297 (VPGPIWFVLKVCALMFVFFWV), and 316-336 (VFLPFSLVWLLLTACVLELAG).

The protein belongs to the complex I subunit 1 family. NDH-1 is composed of 14 different subunits. Subunits NuoA, H, J, K, L, M, N constitute the membrane sector of the complex.

It is found in the cell inner membrane. It catalyses the reaction a quinone + NADH + 5 H(+)(in) = a quinol + NAD(+) + 4 H(+)(out). Functionally, NDH-1 shuttles electrons from NADH, via FMN and iron-sulfur (Fe-S) centers, to quinones in the respiratory chain. The immediate electron acceptor for the enzyme in this species is believed to be ubiquinone. Couples the redox reaction to proton translocation (for every two electrons transferred, four hydrogen ions are translocated across the cytoplasmic membrane), and thus conserves the redox energy in a proton gradient. This subunit may bind ubiquinone. In Granulibacter bethesdensis (strain ATCC BAA-1260 / CGDNIH1), this protein is NADH-quinone oxidoreductase subunit H.